The primary structure comprises 407 residues: tRNA N6-adenosine threonylcarbamoyltransferase, mitochondrial (407 aa).

Residues 1–30 (MISIKGTGRFLLDNYRIWQRRAFNRPIQLR) constitute a mitochondrion transit peptide. His-145 and His-149 together coordinate a divalent metal cation. Residues 170-174 (LVSGG), Asp-203, Ala-217, Glu-221, 328-329 (SN), and Ser-360 contribute to the substrate site. An a divalent metal cation-binding site is contributed by Asp-361.

The protein belongs to the KAE1 / TsaD family. In terms of assembly, homodimer. It depends on a divalent metal cation as a cofactor.

It localises to the mitochondrion. The catalysed reaction is L-threonylcarbamoyladenylate + adenosine(37) in tRNA = N(6)-L-threonylcarbamoyladenosine(37) in tRNA + AMP + H(+). Functionally, required for the formation of a threonylcarbamoyl group on adenosine at position 37 (t(6)A37) in mitochondrial tRNAs that read codons beginning with adenine. Probably involved in the transfer of the threonylcarbamoyl moiety of threonylcarbamoyl-AMP (TC-AMP) to the N6 group of A37. Involved in mitochondrial genome maintenance. The polypeptide is tRNA N6-adenosine threonylcarbamoyltransferase, mitochondrial (QRI7) (Saccharomyces cerevisiae (strain ATCC 204508 / S288c) (Baker's yeast)).